The sequence spans 414 residues: Esterase FrsA (414 aa).

Belongs to the FrsA family.

It carries out the reaction a carboxylic ester + H2O = an alcohol + a carboxylate + H(+). Its function is as follows. Catalyzes the hydrolysis of esters. The polypeptide is Esterase FrsA (Escherichia coli O7:K1 (strain IAI39 / ExPEC)).